The chain runs to 349 residues: 4-hydroxy-3-methylbut-2-enyl diphosphate reductase (349 aa).

Residue Cys18 coordinates [4Fe-4S] cluster. (2E)-4-hydroxy-3-methylbut-2-enyl diphosphate contacts are provided by His47 and His83. Positions 47 and 83 each coordinate dimethylallyl diphosphate. Isopentenyl diphosphate-binding residues include His47 and His83. Cys105 contacts [4Fe-4S] cluster. His133 is a (2E)-4-hydroxy-3-methylbut-2-enyl diphosphate binding site. Dimethylallyl diphosphate is bound at residue His133. His133 is an isopentenyl diphosphate binding site. Glu135 serves as the catalytic Proton donor. Thr174 is a binding site for (2E)-4-hydroxy-3-methylbut-2-enyl diphosphate. Position 204 (Cys204) interacts with [4Fe-4S] cluster. (2E)-4-hydroxy-3-methylbut-2-enyl diphosphate-binding residues include Ser232, Ser233, Asn234, and Ser277. Ser232, Ser233, Asn234, and Ser277 together coordinate dimethylallyl diphosphate. Isopentenyl diphosphate contacts are provided by Ser232, Ser233, Asn234, and Ser277.

This sequence belongs to the IspH family. [4Fe-4S] cluster is required as a cofactor.

It carries out the reaction isopentenyl diphosphate + 2 oxidized [2Fe-2S]-[ferredoxin] + H2O = (2E)-4-hydroxy-3-methylbut-2-enyl diphosphate + 2 reduced [2Fe-2S]-[ferredoxin] + 2 H(+). The enzyme catalyses dimethylallyl diphosphate + 2 oxidized [2Fe-2S]-[ferredoxin] + H2O = (2E)-4-hydroxy-3-methylbut-2-enyl diphosphate + 2 reduced [2Fe-2S]-[ferredoxin] + 2 H(+). It functions in the pathway isoprenoid biosynthesis; dimethylallyl diphosphate biosynthesis; dimethylallyl diphosphate from (2E)-4-hydroxy-3-methylbutenyl diphosphate: step 1/1. The protein operates within isoprenoid biosynthesis; isopentenyl diphosphate biosynthesis via DXP pathway; isopentenyl diphosphate from 1-deoxy-D-xylulose 5-phosphate: step 6/6. Functionally, catalyzes the conversion of 1-hydroxy-2-methyl-2-(E)-butenyl 4-diphosphate (HMBPP) into a mixture of isopentenyl diphosphate (IPP) and dimethylallyl diphosphate (DMAPP). Acts in the terminal step of the DOXP/MEP pathway for isoprenoid precursor biosynthesis. This chain is 4-hydroxy-3-methylbut-2-enyl diphosphate reductase, found in Bartonella bacilliformis (strain ATCC 35685 / KC583 / Herrer 020/F12,63).